The chain runs to 255 residues: MYKIDLNCDLGEGFGVYKMGNDEEILKYITSANIACGFHAGDPKIMHETVRLSLLNDVAIGAHPGLPDLAGFGRRNINVSPDEIYDMVVYQIGALYAFVKSEGGVMHHVKPHGTLYNMAAKNKKLARAIAEGVYNVNPEFILFGLSGSELISEGNRIGLRTASEVFADRTYQLDGSLTPRSAGNAAIITDIDKAAERVYRMIKYGLVMCEQKKDIGIKADTLCIHGDNPHSLIFVRKINKHLKDLGVYIEKIIHE.

This sequence belongs to the LamB/PxpA family. Forms a complex composed of PxpA, PxpB and PxpC.

The catalysed reaction is 5-oxo-L-proline + ATP + 2 H2O = L-glutamate + ADP + phosphate + H(+). In terms of biological role, catalyzes the cleavage of 5-oxoproline to form L-glutamate coupled to the hydrolysis of ATP to ADP and inorganic phosphate. This Clostridium kluyveri (strain ATCC 8527 / DSM 555 / NBRC 12016 / NCIMB 10680 / K1) protein is 5-oxoprolinase subunit A.